The chain runs to 3210 residues: PF 1022-synthetase (3210 aa).

Positions Val-68–Glu-454 are condensation 1. The segment at Ala-483–Arg-876 is adenylation 1. In terms of domain architecture, Carrier 1 spans Ala-1010 to Pro-1086. O-(pantetheine 4'-phosphoryl)serine is present on Ser-1047. Positions Ser-1104–Thr-1534 are condensation 2. Positions Phe-1563–Arg-2023 are adenylation 2. The tract at residues Glu-2081–Val-2236 is S-adenosyl-L-methionine-dependent N-methyltransferase. 2 Carrier domains span residues Asp-2570–Leu-2644 and Thr-2668–Gln-2742. Residues Ser-2604 and Ser-2702 each carry the O-(pantetheine 4'-phosphoryl)serine modification. The condensation 3 stretch occupies residues Leu-2788 to Asn-3203. A disordered region spans residues Val-2976 to Ser-3002.

The protein belongs to the NRP synthetase family. Pantetheine 4'-phosphate serves as cofactor.

It catalyses the reaction 2 (R)-3-phenyllactate + 2 (R)-lactate + 4 L-leucine + 4 S-adenosyl-L-methionine + 8 ATP = PF1022A + 8 AMP + 4 S-adenosyl-L-homocysteine + 8 diphosphate + 8 H(+). It carries out the reaction 4 (R)-3-phenyllactate + 4 L-leucine + 4 S-adenosyl-L-methionine + 8 ATP = PF1022B + 8 AMP + 4 S-adenosyl-L-homocysteine + 8 diphosphate + 8 H(+). The catalysed reaction is 3 (R)-3-phenyllactate + (R)-lactate + 4 L-leucine + 4 S-adenosyl-L-methionine + 8 ATP = PF1022C + 8 AMP + 4 S-adenosyl-L-homocysteine + 8 diphosphate + 8 H(+). The enzyme catalyses (R)-3-phenyllactate + 3 (R)-lactate + 4 L-leucine + 4 S-adenosyl-L-methionine + 8 ATP = PF1022D + 8 AMP + 4 S-adenosyl-L-homocysteine + 8 diphosphate + 8 H(+). It catalyses the reaction 4 (R)-lactate + 4 L-leucine + 4 S-adenosyl-L-methionine + 8 ATP = PF1022F + 8 AMP + 4 S-adenosyl-L-homocysteine + 8 diphosphate + 8 H(+). Its function is as follows. Nonribosomal peptide synthetase that synthesizes cyclooctadepsipeptides (CODPs) PF 1022 that show powerful broad-spectrum anthelmintic activity with low toxicity in animals. Couples 4 N-methyl-L-leucines and a varying content of alpha-D-hydroxy acids (D-lactates or D-phenyllactates) in an alternative fashion. The enzyme is capable of synthesizing all known natural cyclooctadepsipeptides of the PF1022 type differing in the content of D-lactate and D-phenyllactate, using from 4 D-lactates (PF 1022F) to 4 D-phenyllactates (PF 1022B), respectively. The formation of different PF-related compounds is mainly controlled by the molar ratio of the hydroxy acids. N-methylation of the substrate L-leucine takes place after covalent binding prior to peptide bond formation. In Rosellinia sp. (Mycelia sterilia), this protein is PF 1022-synthetase.